Here is a 69-residue protein sequence, read N- to C-terminus: Small cysteine-rich protein (69 aa).

The N-terminal stretch at 1-19 is a signal peptide; sequence MKLQLCLVLLLLGVLYVQS. Positions 20-22 are excised as a propeptide; it reads VPE.

The protein belongs to the Cnidaria small cysteine-rich protein (SCRiP) family. delta subfamily. In terms of processing, contains 4 disulfide bonds.

It is found in the secreted. It localises to the nematocyst. Induces neurotoxic symptoms on zebrafish. Has also been claimed to be implied in calcification, but this function seems improbable. This chain is Small cysteine-rich protein, found in Metridium senile (Brown sea anemone).